A 407-amino-acid polypeptide reads, in one-letter code: Acetate kinase (407 aa).

N10 contributes to the Mg(2+) binding site. ATP is bound at residue K17. R93 contacts substrate. D150 acts as the Proton donor/acceptor in catalysis. Residues 210-214 (HLGNG), 284-286 (DMR), and 332-336 (GVGEN) each bind ATP. Residue E386 coordinates Mg(2+).

Belongs to the acetokinase family. In terms of assembly, homodimer. It depends on Mg(2+) as a cofactor. The cofactor is Mn(2+).

The protein resides in the cytoplasm. The enzyme catalyses acetate + ATP = acetyl phosphate + ADP. The protein operates within metabolic intermediate biosynthesis; acetyl-CoA biosynthesis; acetyl-CoA from acetate: step 1/2. In terms of biological role, catalyzes the formation of acetyl phosphate from acetate and ATP. Can also catalyze the reverse reaction. In Streptomyces coelicolor (strain ATCC BAA-471 / A3(2) / M145), this protein is Acetate kinase.